Consider the following 247-residue polypeptide: Acidic leucine-rich nuclear phosphoprotein 32 family member A (247 aa).

A Phosphothreonine modification is found at Thr-15. Ser-17 bears the Phosphoserine mark. LRR repeat units follow at residues 18–41 (DVKELVLDNCRSIEGKIEGLTDEF), 43–64 (ELEFLSTINVGLTSISNLPKLN), 65–87 (KLKKLELSENRISGDLEVLAEKC), and 89–110 (NLKHLNLSGNKIKDLSTIEPLK). The 39-residue stretch at 123 to 161 (CEVTNLNAYRENVFKLLPQVMYLDGYDRDNKEAPDSDVE) folds into the LRRCT domain. The segment at 150–172 (RDNKEAPDSDVEGYVEDDDEEDE) is necessary for tumor-suppressive function. The interval 150 to 247 (RDNKEAPDSD…EPDDEGQEDD (98 aa)) is disordered. Residues 157–230 (DSDVEGYVED…EDEEDAAEEE (74 aa)) show a composition bias toward acidic residues. Ser-158 and Ser-202 each carry phosphoserine. Residues 165-247 (EDDDEEDEDE…EPDDEGQEDD (83 aa)) form an interaction with E4F1 region.

The protein belongs to the ANP32 family. As to quaternary structure, component of the SET complex, composed of at least ANP32A, APEX1, HMGB2, NME1, SET and TREX1. Directly interacts with SET. Interacts with ATXN1/SCA1. Interacts with MAP1B. Interacts with ELAVL1. Part of the INHAT (inhibitor of histone acetyltransferases) complex. Interacts with E4F1. In terms of processing, phosphorylated on serine residues, at least in part by casein kinase 2/CK2. Some glutamate residues are glycylated by TTLL8. This modification occurs exclusively on glutamate residues and results in a glycine chain on the gamma-carboxyl group. As to expression, widely distributed in the central nervous system, with an abundant expression in the cerebellum.

Its subcellular location is the nucleus. It is found in the cytoplasm. The protein resides in the endoplasmic reticulum. Multifunctional protein that is involved in the regulation of many processes including tumor suppression, apoptosis, cell cycle progression or transcription. Promotes apoptosis by favouring the activation of caspase-9/CASP9 and allowing apoptosome formation. In addition, plays a role in the modulation of histone acetylation and transcription as part of the INHAT (inhibitor of histone acetyltransferases) complex. Inhibits the histone-acetyltranferase activity of EP300/CREBBP (CREB-binding protein) and EP300/CREBBP-associated factor by histone masking. Preferentially binds to unmodified histone H3 and sterically inhibiting its acetylation and phosphorylation leading to cell growth inhibition. Participates in other biochemical processes such as regulation of mRNA nuclear-to-cytoplasmic translocation and stability by its association with ELAVL1 (Hu-antigen R). Plays a role in E4F1-mediated transcriptional repression as well as inhibition of protein phosphatase 2A. The protein is Acidic leucine-rich nuclear phosphoprotein 32 family member A (Anp32a) of Rattus norvegicus (Rat).